The primary structure comprises 240 residues: tRNA pseudouridine synthase B (240 aa).

Asp-48 acts as the Nucleophile in catalysis.

The protein belongs to the pseudouridine synthase TruB family. Type 1 subfamily.

It carries out the reaction uridine(55) in tRNA = pseudouridine(55) in tRNA. In terms of biological role, responsible for synthesis of pseudouridine from uracil-55 in the psi GC loop of transfer RNAs. The sequence is that of tRNA pseudouridine synthase B from Bacteroides thetaiotaomicron (strain ATCC 29148 / DSM 2079 / JCM 5827 / CCUG 10774 / NCTC 10582 / VPI-5482 / E50).